We begin with the raw amino-acid sequence, 387 residues long: Exodeoxyribonuclease 7 large subunit (387 aa).

It belongs to the XseA family. In terms of assembly, heterooligomer composed of large and small subunits.

The protein localises to the cytoplasm. The catalysed reaction is Exonucleolytic cleavage in either 5'- to 3'- or 3'- to 5'-direction to yield nucleoside 5'-phosphates.. In terms of biological role, bidirectionally degrades single-stranded DNA into large acid-insoluble oligonucleotides, which are then degraded further into small acid-soluble oligonucleotides. The polypeptide is Exodeoxyribonuclease 7 large subunit (Synechococcus sp. (strain CC9902)).